Here is a 174-residue protein sequence, read N- to C-terminus: ATP synthase subunit b (174 aa).

The helical transmembrane segment at 15–33 (NPGLVIWTLVTFSVVVFVL) threads the bilayer.

This sequence belongs to the ATPase B chain family. As to quaternary structure, F-type ATPases have 2 components, F(1) - the catalytic core - and F(0) - the membrane proton channel. F(1) has five subunits: alpha(3), beta(3), gamma(1), delta(1), epsilon(1). F(0) has three main subunits: a(1), b(2) and c(10-14). The alpha and beta chains form an alternating ring which encloses part of the gamma chain. F(1) is attached to F(0) by a central stalk formed by the gamma and epsilon chains, while a peripheral stalk is formed by the delta and b chains.

The protein resides in the cell inner membrane. F(1)F(0) ATP synthase produces ATP from ADP in the presence of a proton or sodium gradient. F-type ATPases consist of two structural domains, F(1) containing the extramembraneous catalytic core and F(0) containing the membrane proton channel, linked together by a central stalk and a peripheral stalk. During catalysis, ATP synthesis in the catalytic domain of F(1) is coupled via a rotary mechanism of the central stalk subunits to proton translocation. Functionally, component of the F(0) channel, it forms part of the peripheral stalk, linking F(1) to F(0). This chain is ATP synthase subunit b, found in Leptospira biflexa serovar Patoc (strain Patoc 1 / Ames).